We begin with the raw amino-acid sequence, 332 residues long: Glycerol-3-phosphate dehydrogenase [NAD(P)+] (332 aa).

The NADPH site is built by S15, W16, and K110. The sn-glycerol 3-phosphate site is built by K110, G137, and S139. A141 is a binding site for NADPH. Residues K192, D245, S255, R256, and N257 each contribute to the sn-glycerol 3-phosphate site. Catalysis depends on K192, which acts as the Proton acceptor. Residue R256 participates in NADPH binding. An NADPH-binding site is contributed by E282.

Belongs to the NAD-dependent glycerol-3-phosphate dehydrogenase family.

Its subcellular location is the cytoplasm. It catalyses the reaction sn-glycerol 3-phosphate + NAD(+) = dihydroxyacetone phosphate + NADH + H(+). The enzyme catalyses sn-glycerol 3-phosphate + NADP(+) = dihydroxyacetone phosphate + NADPH + H(+). It functions in the pathway membrane lipid metabolism; glycerophospholipid metabolism. Functionally, catalyzes the reduction of the glycolytic intermediate dihydroxyacetone phosphate (DHAP) to sn-glycerol 3-phosphate (G3P), the key precursor for phospholipid synthesis. The sequence is that of Glycerol-3-phosphate dehydrogenase [NAD(P)+] from Coxiella burnetii (strain RSA 331 / Henzerling II).